The chain runs to 293 residues: Protease HtpX homolog (293 aa).

A run of 2 helical transmembrane segments spans residues 4–24 and 38–58; these read IFLF…TMRI and LTGL…ISLL. Residue His146 participates in Zn(2+) binding. Glu147 is a catalytic residue. Position 150 (His150) interacts with Zn(2+). The next 2 membrane-spanning stretches (helical) occupy residues 161–181 and 198–218; these read LIQG…GYFV and ATVI…VAWF. Residue Glu223 participates in Zn(2+) binding.

The protein belongs to the peptidase M48B family. Zn(2+) serves as cofactor.

The protein resides in the cell inner membrane. The protein is Protease HtpX homolog of Bordetella parapertussis (strain 12822 / ATCC BAA-587 / NCTC 13253).